A 422-amino-acid chain; its full sequence is Probable tRNA pseudouridine synthase D 2 (422 aa).

The Nucleophile role is filled by Asp89. The 212-residue stretch at 160 to 371 folds into the TRUD domain; it reads GAPNYFDSQR…IYSERKILSI (212 aa).

This sequence belongs to the pseudouridine synthase TruD family.

It carries out the reaction uridine(13) in tRNA = pseudouridine(13) in tRNA. Could be responsible for synthesis of pseudouridine from uracil-13 in transfer RNAs. This Methanocaldococcus jannaschii (strain ATCC 43067 / DSM 2661 / JAL-1 / JCM 10045 / NBRC 100440) (Methanococcus jannaschii) protein is Probable tRNA pseudouridine synthase D 2.